The primary structure comprises 593 residues: Scarecrow-like protein 1 (593 aa).

Disordered regions lie at residues 29-61 (NPKLYTLNENGNNNGVSSAQIFDPDRSKNPCLT) and 188-216 (YQNESEQHQDSPKESSSADSNSHVSSKEV). A compositionally biased stretch (polar residues) spans 35 to 48 (LNENGNNNGVSSAQ). Over residues 202–211 (SSSADSNSHV) the composition is skewed to low complexity. A GRAS domain is found at 213-593 (SKEVVSQATP…KSLIVASAWR (381 aa)). The interval 220–280 (ATPKQILISC…AARMAASGKF (61 aa)) is leucine repeat I (LRI). A VHIID region spans residues 299–364 (MQVLFEVCPC…GKRPRLRLTG (66 aa)). Residues 330 to 334 (VHIID) carry the VHIID motif. A leucine repeat II (LRII) region spans residues 380–411 (IIGLRLEQLAEDNGVSFKFKAMPSKTSIVSPS). Positions 421–515 (LIVNFAFQLH…RQCLARDIVN (95 aa)) are PFYRE. An SAW region spans residues 518 to 593 (ACEGEERIER…KSLIVASAWR (76 aa)).

Belongs to the GRAS family. In terms of tissue distribution, expressed in seedlings, roots, shoots, leaves, flowers and siliques.

It localises to the nucleus. In terms of biological role, probable transcription factor involved in plant development. This Arabidopsis thaliana (Mouse-ear cress) protein is Scarecrow-like protein 1 (SCL1).